The chain runs to 589 residues: Actin-histidine N-methyltransferase (589 aa).

A disordered region spans residues 1–22; sequence MGKKSRVKTQKSGTGATATVSP. The span at 10-20 shows a compositional bias: polar residues; sequence QKSGTGATATV. S-adenosyl-L-methionine contacts are provided by residues R75, 104–106, R254, 275–279, and 325–327; these read EGF, DMCNH, and SGF. Residues 94–314 enclose the SET domain; sequence EGFEMVNFKE…AGEQIYIFYG (221 aa). The residue at position 513 (S513) is a Phosphoserine. Residues 547-589 are disordered; it reads LVNGERSFPNGTRSEEDLKQEERKRAKGDAKESSSDSTDAVKE. Residues 559–589 show a composition bias toward basic and acidic residues; the sequence is RSEEDLKQEERKRAKGDAKESSSDSTDAVKE.

This sequence belongs to the class V-like SAM-binding methyltransferase superfamily. SETD3 actin-histidine methyltransferase family. Interacts with MYOD1. In terms of processing, phosphorylated by GSK3B, which is required for recognition by the SCF(FBXW7) complex and subsequent degradation. Post-translationally, ubiquitinated by the SCF(FBXW7) complex following phosphorylation by GSK3B, leading to its degradation by the proteasome.

The protein resides in the cytoplasm. It localises to the nucleus. It catalyses the reaction L-histidyl-[protein] + S-adenosyl-L-methionine = N(tele)-methyl-L-histidyl-[protein] + S-adenosyl-L-homocysteine + H(+). In terms of biological role, protein-histidine N-methyltransferase that specifically mediates 3-methylhistidine (tele-methylhistidine) methylation of actin at 'His-73'. Histidine methylation of actin is required for smooth muscle contraction of the laboring uterus during delivery. Does not have protein-lysine N-methyltransferase activity and probably only catalyzes histidine methylation of actin. This Dasypus novemcinctus (Nine-banded armadillo) protein is Actin-histidine N-methyltransferase.